The following is a 296-amino-acid chain: Fructose-bisphosphate aldolase class 1 (296 aa).

Glu-175 functions as the Proton acceptor in the catalytic mechanism. The active-site Schiff-base intermediate with dihydroxyacetone-P is the Lys-212.

This sequence belongs to the class I fructose-bisphosphate aldolase family.

The enzyme catalyses beta-D-fructose 1,6-bisphosphate = D-glyceraldehyde 3-phosphate + dihydroxyacetone phosphate. It functions in the pathway carbohydrate degradation; glycolysis; D-glyceraldehyde 3-phosphate and glycerone phosphate from D-glucose: step 4/4. The polypeptide is Fructose-bisphosphate aldolase class 1 (Staphylococcus aureus (strain USA300)).